A 428-amino-acid polypeptide reads, in one-letter code: Glucose-1-phosphate adenylyltransferase (428 aa).

Residues Tyr-114, Gly-179, Glu-194–Lys-195, and Ser-212 contribute to the alpha-D-glucose 1-phosphate site.

This sequence belongs to the bacterial/plant glucose-1-phosphate adenylyltransferase family. Homotetramer.

It catalyses the reaction alpha-D-glucose 1-phosphate + ATP + H(+) = ADP-alpha-D-glucose + diphosphate. It participates in glycan biosynthesis; glycogen biosynthesis. Functionally, involved in the biosynthesis of ADP-glucose, a building block required for the elongation reactions to produce glycogen. Catalyzes the reaction between ATP and alpha-D-glucose 1-phosphate (G1P) to produce pyrophosphate and ADP-Glc. The protein is Glucose-1-phosphate adenylyltransferase of Yersinia pseudotuberculosis serotype O:1b (strain IP 31758).